The sequence spans 589 residues: Lipoprotein LpqB (589 aa).

An N-terminal signal peptide occupies residues 1–20 (MMRGVLVIMRLLCLGMLFTG). Cys21 carries N-palmitoyl cysteine lipidation. A lipid anchor (S-diacylglycerol cysteine) is attached at Cys21.

It belongs to the LpqB lipoprotein family.

The protein localises to the cell membrane. This Mycobacterium leprae (strain TN) protein is Lipoprotein LpqB.